Reading from the N-terminus, the 251-residue chain is uncharacterized protein (251 aa).

The segment at 229 to 251 (TSTETSPEHQADLKDDNSDISST) is disordered. The segment covering 234-245 (SPEHQADLKDDN) has biased composition (basic and acidic residues).

This is an uncharacterized protein from Acanthamoeba polyphaga (Amoeba).